A 154-amino-acid chain; its full sequence is Large ribosomal subunit protein uL22 (154 aa).

This sequence belongs to the universal ribosomal protein uL22 family. In terms of assembly, part of the 50S ribosomal subunit.

Its function is as follows. This protein binds specifically to 23S rRNA. It makes multiple contacts with different domains of the 23S rRNA in the assembled 50S subunit and ribosome. Functionally, the globular domain of the protein is located near the polypeptide exit tunnel on the outside of the subunit, while an extended beta-hairpin is found that lines the wall of the exit tunnel in the center of the 70S ribosome. The chain is Large ribosomal subunit protein uL22 from Methanoregula boonei (strain DSM 21154 / JCM 14090 / 6A8).